Consider the following 163-residue polypeptide: Probable cyclic pyranopterin monophosphate synthase (163 aa).

Residues 1–23 are disordered; it reads MPDGDDDALTHTTADGDAQMVDV. Substrate-binding positions include 80–82 and 116–117; these read MCH and ME. The active site involves D131.

Belongs to the MoaC family. In terms of assembly, homohexamer; trimer of dimers.

It carries out the reaction (8S)-3',8-cyclo-7,8-dihydroguanosine 5'-triphosphate = cyclic pyranopterin phosphate + diphosphate. It functions in the pathway cofactor biosynthesis; molybdopterin biosynthesis. In terms of biological role, catalyzes the conversion of (8S)-3',8-cyclo-7,8-dihydroguanosine 5'-triphosphate to cyclic pyranopterin monophosphate (cPMP). This is Probable cyclic pyranopterin monophosphate synthase from Halobacterium salinarum (strain ATCC 29341 / DSM 671 / R1).